A 449-amino-acid polypeptide reads, in one-letter code: tRNA-2-methylthio-N(6)-dimethylallyladenosine synthase (449 aa).

One can recognise an MTTase N-terminal domain in the interval 2–119 (KGLFIRTYGC…LPEMIARASR (118 aa)). [4Fe-4S] cluster-binding residues include Cys11, Cys47, Cys82, Cys157, Cys161, and Cys164. The 236-residue stretch at 143–378 (EADGPAAFVS…QALLREQQTE (236 aa)) folds into the Radical SAM core domain. Residues 381–443 (ASQIGKTLPV…LNSLTGELVR (63 aa)) enclose the TRAM domain.

Belongs to the methylthiotransferase family. MiaB subfamily. Monomer. Requires [4Fe-4S] cluster as cofactor.

Its subcellular location is the cytoplasm. The enzyme catalyses N(6)-dimethylallyladenosine(37) in tRNA + (sulfur carrier)-SH + AH2 + 2 S-adenosyl-L-methionine = 2-methylsulfanyl-N(6)-dimethylallyladenosine(37) in tRNA + (sulfur carrier)-H + 5'-deoxyadenosine + L-methionine + A + S-adenosyl-L-homocysteine + 2 H(+). Its function is as follows. Catalyzes the methylthiolation of N6-(dimethylallyl)adenosine (i(6)A), leading to the formation of 2-methylthio-N6-(dimethylallyl)adenosine (ms(2)i(6)A) at position 37 in tRNAs that read codons beginning with uridine. The polypeptide is tRNA-2-methylthio-N(6)-dimethylallyladenosine synthase (Hyphomonas neptunium (strain ATCC 15444)).